The following is a 372-amino-acid chain: Phospho-N-acetylmuramoyl-pentapeptide-transferase (372 aa).

10 helical membrane-spanning segments follow: residues 25-45 (RSLL…PIMI), 73-93 (TMGG…WADL), 98-118 (VWIV…DDWI), 134-154 (FFWT…IATQ), 176-196 (SIPL…YLVI), 211-231 (GLAI…AYLS), 251-271 (LVVI…YNAH), 275-295 (VFMG…IAVM), 300-320 (IVFA…FLQI), and 349-369 (QVVI…LMTL).

Belongs to the glycosyltransferase 4 family. MraY subfamily. Requires Mg(2+) as cofactor.

The protein resides in the cell inner membrane. The catalysed reaction is UDP-N-acetyl-alpha-D-muramoyl-L-alanyl-gamma-D-glutamyl-meso-2,6-diaminopimeloyl-D-alanyl-D-alanine + di-trans,octa-cis-undecaprenyl phosphate = di-trans,octa-cis-undecaprenyl diphospho-N-acetyl-alpha-D-muramoyl-L-alanyl-D-glutamyl-meso-2,6-diaminopimeloyl-D-alanyl-D-alanine + UMP. The protein operates within cell wall biogenesis; peptidoglycan biosynthesis. Catalyzes the initial step of the lipid cycle reactions in the biosynthesis of the cell wall peptidoglycan: transfers peptidoglycan precursor phospho-MurNAc-pentapeptide from UDP-MurNAc-pentapeptide onto the lipid carrier undecaprenyl phosphate, yielding undecaprenyl-pyrophosphoryl-MurNAc-pentapeptide, known as lipid I. In Acinetobacter baumannii (strain AB0057), this protein is Phospho-N-acetylmuramoyl-pentapeptide-transferase.